The sequence spans 456 residues: Bifunctional protein GlmU (456 aa).

Residues 1–229 (MSNSSMSVVI…LSEVEGVNNR (229 aa)) form a pyrophosphorylase region. Residues 11-14 (LAAG), Lys25, Gln76, 81-82 (GT), 103-105 (YGD), Gly140, Glu154, Asn169, and Asn227 each bind UDP-N-acetyl-alpha-D-glucosamine. A Mg(2+)-binding site is contributed by Asp105. Residue Asn227 coordinates Mg(2+). Positions 230-250 (LQLAALERVYQSEQAEKLLLA) are linker. The segment at 251–456 (GVMLLDPARF…QGWQRPIKKK (206 aa)) is N-acetyltransferase. 2 residues coordinate UDP-N-acetyl-alpha-D-glucosamine: Arg333 and Lys351. The Proton acceptor role is filled by His363. Residues Tyr366 and Asn377 each contribute to the UDP-N-acetyl-alpha-D-glucosamine site. Acetyl-CoA contacts are provided by residues Ala380, 386-387 (NY), Ser405, Ala423, and Arg440.

It in the N-terminal section; belongs to the N-acetylglucosamine-1-phosphate uridyltransferase family. In the C-terminal section; belongs to the transferase hexapeptide repeat family. Homotrimer. It depends on Mg(2+) as a cofactor.

It localises to the cytoplasm. It catalyses the reaction alpha-D-glucosamine 1-phosphate + acetyl-CoA = N-acetyl-alpha-D-glucosamine 1-phosphate + CoA + H(+). The enzyme catalyses N-acetyl-alpha-D-glucosamine 1-phosphate + UTP + H(+) = UDP-N-acetyl-alpha-D-glucosamine + diphosphate. Its pathway is nucleotide-sugar biosynthesis; UDP-N-acetyl-alpha-D-glucosamine biosynthesis; N-acetyl-alpha-D-glucosamine 1-phosphate from alpha-D-glucosamine 6-phosphate (route II): step 2/2. The protein operates within nucleotide-sugar biosynthesis; UDP-N-acetyl-alpha-D-glucosamine biosynthesis; UDP-N-acetyl-alpha-D-glucosamine from N-acetyl-alpha-D-glucosamine 1-phosphate: step 1/1. It participates in bacterial outer membrane biogenesis; LPS lipid A biosynthesis. Functionally, catalyzes the last two sequential reactions in the de novo biosynthetic pathway for UDP-N-acetylglucosamine (UDP-GlcNAc). The C-terminal domain catalyzes the transfer of acetyl group from acetyl coenzyme A to glucosamine-1-phosphate (GlcN-1-P) to produce N-acetylglucosamine-1-phosphate (GlcNAc-1-P), which is converted into UDP-GlcNAc by the transfer of uridine 5-monophosphate (from uridine 5-triphosphate), a reaction catalyzed by the N-terminal domain. In Yersinia enterocolitica serotype O:8 / biotype 1B (strain NCTC 13174 / 8081), this protein is Bifunctional protein GlmU.